The sequence spans 179 residues: Ribosome maturation factor RimM (179 aa).

Positions 99 to 174 constitute a PRC barrel domain; sequence EEDEYYFDQI…IMIVDLPEGL (76 aa).

This sequence belongs to the RimM family. Binds ribosomal protein uS19.

It is found in the cytoplasm. An accessory protein needed during the final step in the assembly of 30S ribosomal subunit, possibly for assembly of the head region. Essential for efficient processing of 16S rRNA. May be needed both before and after RbfA during the maturation of 16S rRNA. It has affinity for free ribosomal 30S subunits but not for 70S ribosomes. The chain is Ribosome maturation factor RimM from Natranaerobius thermophilus (strain ATCC BAA-1301 / DSM 18059 / JW/NM-WN-LF).